The following is an 860-amino-acid chain: Leucine--tRNA ligase (860 aa).

The short motif at 42 to 52 (PYPSGRLHMGH) is the 'HIGH' region element. Positions 619-623 (KMSKS) match the 'KMSKS' region motif. Lys-622 serves as a coordination point for ATP.

The protein belongs to the class-I aminoacyl-tRNA synthetase family.

Its subcellular location is the cytoplasm. It carries out the reaction tRNA(Leu) + L-leucine + ATP = L-leucyl-tRNA(Leu) + AMP + diphosphate. This is Leucine--tRNA ligase from Escherichia coli O17:K52:H18 (strain UMN026 / ExPEC).